Reading from the N-terminus, the 207-residue chain is Dephospho-CoA kinase (207 aa).

The DPCK domain maps to 10–207; that stretch reads TLGLTGGIGS…FYLTLRGGQS (198 aa). Residue 18–23 participates in ATP binding; sequence GSGKSA.

Belongs to the CoaE family.

The protein localises to the cytoplasm. The catalysed reaction is 3'-dephospho-CoA + ATP = ADP + CoA + H(+). The protein operates within cofactor biosynthesis; coenzyme A biosynthesis; CoA from (R)-pantothenate: step 5/5. In terms of biological role, catalyzes the phosphorylation of the 3'-hydroxyl group of dephosphocoenzyme A to form coenzyme A. The chain is Dephospho-CoA kinase from Pseudomonas fluorescens (strain ATCC BAA-477 / NRRL B-23932 / Pf-5).